We begin with the raw amino-acid sequence, 396 residues long: S-adenosylmethionine synthase (396 aa).

His15 contributes to the ATP binding site. Asp17 serves as a coordination point for Mg(2+). Residue Glu43 coordinates K(+). Residues Glu56 and Gln99 each contribute to the L-methionine site. The tract at residues Gln99–Lys109 is flexible loop. ATP is bound by residues Asp175–Lys177, Arg241–Phe242, Asp250, Arg256–Lys257, Ala273, and Lys277. Asp250 is an L-methionine binding site. Lys281 contacts L-methionine.

This sequence belongs to the AdoMet synthase family. As to quaternary structure, homotetramer; dimer of dimers. It depends on Mg(2+) as a cofactor. K(+) is required as a cofactor.

The protein localises to the cytoplasm. It catalyses the reaction L-methionine + ATP + H2O = S-adenosyl-L-methionine + phosphate + diphosphate. The protein operates within amino-acid biosynthesis; S-adenosyl-L-methionine biosynthesis; S-adenosyl-L-methionine from L-methionine: step 1/1. Catalyzes the formation of S-adenosylmethionine (AdoMet) from methionine and ATP. The overall synthetic reaction is composed of two sequential steps, AdoMet formation and the subsequent tripolyphosphate hydrolysis which occurs prior to release of AdoMet from the enzyme. The polypeptide is S-adenosylmethionine synthase (Ruminiclostridium cellulolyticum (strain ATCC 35319 / DSM 5812 / JCM 6584 / H10) (Clostridium cellulolyticum)).